The sequence spans 151 residues: MESWLFLALVLVVALVGKNMSLIIATGVVMALKLIPFASKWLPVIQAKGINWGVTVISVAILIPVATGQIGFKDLINTFKSPAGWIAILAGIAVAILSRYGVDQLAAVPQVTVALVLGTIIGVVVFKGVAAGPVIASGMTYLVITLFNLHF.

The next 5 membrane-spanning stretches (helical) occupy residues 4 to 24, 25 to 45, 52 to 72, 78 to 98, and 115 to 135; these read WLFLALVLVVALVGKNMSLII, ATGVVMALKLIPFASKWLPVI, WGVTVISVAILIPVATGQIGF, TFKSPAGWIAILAGIAVAILS, and LVLGTIIGVVVFKGVAAGPVI.

Belongs to the UPF0756 family.

The protein localises to the cell membrane. This Lactobacillus helveticus (strain DPC 4571) protein is UPF0756 membrane protein lhv_0995.